A 473-amino-acid chain; its full sequence is Ribulose bisphosphate carboxylase large chain (473 aa).

Positions 116 and 166 each coordinate substrate. Residue Lys168 is the Proton acceptor of the active site. Lys170 serves as a coordination point for substrate. 3 residues coordinate Mg(2+): Lys194, Asp196, and Glu197. Position 194 is an N6-carboxylysine (Lys194). His287 acts as the Proton acceptor in catalysis. Substrate contacts are provided by Arg288, His320, and Ser372.

Belongs to the RuBisCO large chain family. Type I subfamily. Heterohexadecamer of 8 large chains and 8 small chains. It depends on Mg(2+) as a cofactor.

The enzyme catalyses 2 (2R)-3-phosphoglycerate + 2 H(+) = D-ribulose 1,5-bisphosphate + CO2 + H2O. The catalysed reaction is D-ribulose 1,5-bisphosphate + O2 = 2-phosphoglycolate + (2R)-3-phosphoglycerate + 2 H(+). RuBisCO catalyzes two reactions: the carboxylation of D-ribulose 1,5-bisphosphate, the primary event in carbon dioxide fixation, as well as the oxidative fragmentation of the pentose substrate. Both reactions occur simultaneously and in competition at the same active site. The sequence is that of Ribulose bisphosphate carboxylase large chain from Nitrobacter winogradskyi (Nitrobacter agilis).